A 308-amino-acid polypeptide reads, in one-letter code: Mycothiol acetyltransferase (308 aa).

1D-myo-inositol 2-(L-cysteinylamino)-2-deoxy-alpha-D-glucopyranoside is bound at residue Glu-44. Residue 83–85 (AVV) participates in acetyl-CoA binding. The region spanning 161–308 (VRLRTYAGSA…DVAYGRPEGD (148 aa)) is the N-acetyltransferase domain. 3 residues coordinate 1D-myo-inositol 2-(L-cysteinylamino)-2-deoxy-alpha-D-glucopyranoside: Glu-188, Lys-230, and Glu-238. Residues 242–244 (VGV) and 249–255 (QGRGLGR) contribute to the acetyl-CoA site. 1D-myo-inositol 2-(L-cysteinylamino)-2-deoxy-alpha-D-glucopyranoside is bound at residue Tyr-276. Residue 281–286 (NTAALH) coordinates acetyl-CoA.

It belongs to the acetyltransferase family. MshD subfamily. In terms of assembly, monomer.

The enzyme catalyses 1D-myo-inositol 2-(L-cysteinylamino)-2-deoxy-alpha-D-glucopyranoside + acetyl-CoA = mycothiol + CoA + H(+). Catalyzes the transfer of acetyl from acetyl-CoA to desacetylmycothiol (Cys-GlcN-Ins) to form mycothiol. This chain is Mycothiol acetyltransferase, found in Gordonia bronchialis (strain ATCC 25592 / DSM 43247 / BCRC 13721 / JCM 3198 / KCTC 3076 / NBRC 16047 / NCTC 10667) (Rhodococcus bronchialis).